The primary structure comprises 83 residues: Mu-theraphotoxin-Hhn2j 4 (83 aa).

A signal peptide spans 1–21 (MKASMFLALAGLVLLFVVGYA). Positions 22 to 48 (SESEEKEFPIELLSKIFAVDVFKGEGR) are excised as a propeptide. Cystine bridges form between cysteine 50/cysteine 65, cysteine 57/cysteine 70, and cysteine 64/cysteine 77. Leucine 81 carries the post-translational modification Leucine amide.

The protein belongs to the neurotoxin 10 (Hwtx-1) family. 15 (Hntx-3) subfamily. In terms of assembly, monomer. In terms of tissue distribution, expressed by the venom gland.

The protein localises to the secreted. Functionally, lethal neurotoxin. Selectively blocks tetrodotoxin-sensitive voltage-gated sodium channels (Nav). Does not affect tetrodotoxin-resistant voltage-gated sodium channels or calcium channels. The protein is Mu-theraphotoxin-Hhn2j 4 of Cyriopagopus hainanus (Chinese bird spider).